The sequence spans 266 residues: Glutamate racemase (266 aa).

Residues 9–10 and 41–42 each bind substrate; these read DS and YG. The active-site Proton donor/acceptor is Cys-72. Position 73–74 (73–74) interacts with substrate; sequence NT. Cys-184 serves as the catalytic Proton donor/acceptor. 185-186 provides a ligand contact to substrate; that stretch reads TH.

This sequence belongs to the aspartate/glutamate racemases family.

The catalysed reaction is L-glutamate = D-glutamate. Its pathway is cell wall biogenesis; peptidoglycan biosynthesis. Provides the (R)-glutamate required for cell wall biosynthesis. This is Glutamate racemase from Staphylococcus haemolyticus (strain JCSC1435).